The chain runs to 434 residues: Forkhead box protein A2 (434 aa).

Positions 149–243 (KPPYSYISLI…ENGCYLRRQK (95 aa)) form a DNA-binding region, fork-head. The segment covering 249-262 (KKPSLREGGGKKLS) has biased composition (basic and acidic residues). Residues 249-339 (KKPSLREGGG…VLSHEAQSHL (91 aa)) form a disordered region. 2 stretches are compositionally biased toward low complexity: residues 263–291 (EGSSSVGSAANSSSESSVGNESPHSSSSP) and 317–333 (ASQAQHLLSQHHSVLSH).

The protein localises to the nucleus. Acts as a transcriptional activator during early development, limiting the extent of mesoderm formation in the gastrula. Binds to DNA via the target sequence 5'-GT[AC]AACA-3', with 5'-GTAAACA-3' being the preferred binding site. The sequence is that of Forkhead box protein A2 from Xenopus tropicalis (Western clawed frog).